We begin with the raw amino-acid sequence, 190 residues long: uncharacterized protein (190 aa).

At 1–55 the chain is on the cytoplasmic side; it reads MSRLRRFNRKILSLSSDYTHDGESDQEDVSILPLDTEEQEELIQKFETNAHITNK. The chain crosses the membrane as a helical span at residues 56–76; sequence LYINLLSILYLLYGGLLMILV. Over 77 to 80 the chain is Extracellular; it reads RKSR. Residues 81–101 form a helical membrane-spanning segment; that stretch reads GYIKLALLAGANSLICSCITL. Residues 102-123 are Cytoplasmic-facing; the sequence is RYDIVNDYLLFKKFKLRVSNFS. Residues 124 to 144 form a helical membrane-spanning segment; sequence INIINIILLVLMAWISFNHVV. The Extracellular portion of the chain corresponds to 145–149; the sequence is EDKKT. A helical membrane pass occupies residues 150–170; sequence VLCLQVPMFLFWVAVLVKRWA. At 171 to 190 the chain is on the cytoplasmic side; that stretch reads RNIEDEIADLRCLKYKYKNA.

Its subcellular location is the membrane. This is an uncharacterized protein from Saccharomyces cerevisiae (strain ATCC 204508 / S288c) (Baker's yeast).